Consider the following 128-residue polypeptide: Putative esterase aq_1494 (128 aa).

The active site involves Asp-15.

The protein belongs to the 4-hydroxybenzoyl-CoA thioesterase family.

This is Putative esterase aq_1494 from Aquifex aeolicus (strain VF5).